The primary structure comprises 253 residues: Allene oxide cyclase 2, chloroplastic (253 aa).

Residues 1 to 77 (MASSAVSLQS…SQNGNIENPR (77 aa)) constitute a chloroplast transit peptide.

It belongs to the allene oxide cyclase family. As to expression, highly expressed in fully developed leaves.

It is found in the plastid. The protein resides in the chloroplast. The catalysed reaction is (9Z,13S,15Z)-12,13-epoxyoctadeca-9,11,15-trienoate = (9S,13S,15Z)-12-oxophyto-10,15-dienoate. Functionally, involved in the production of 12-oxo-phytodienoic acid (OPDA), a precursor of jasmonic acid. The chain is Allene oxide cyclase 2, chloroplastic (AOC2) from Arabidopsis thaliana (Mouse-ear cress).